A 156-amino-acid chain; its full sequence is Ribosomal RNA large subunit methyltransferase H (156 aa).

Residues leucine 73, glycine 104, and 123 to 128 contribute to the S-adenosyl-L-methionine site; that span reads ISSMTL.

The protein belongs to the RNA methyltransferase RlmH family. Homodimer.

The protein resides in the cytoplasm. It carries out the reaction pseudouridine(1915) in 23S rRNA + S-adenosyl-L-methionine = N(3)-methylpseudouridine(1915) in 23S rRNA + S-adenosyl-L-homocysteine + H(+). Functionally, specifically methylates the pseudouridine at position 1915 (m3Psi1915) in 23S rRNA. This chain is Ribosomal RNA large subunit methyltransferase H, found in Burkholderia ambifaria (strain ATCC BAA-244 / DSM 16087 / CCUG 44356 / LMG 19182 / AMMD) (Burkholderia cepacia (strain AMMD)).